The following is a 243-amino-acid chain: Dirigent protein 16 (243 aa).

An N-terminal signal peptide occupies residues 1–24 (MMIKQSPFLLLTTILFTVAVFVAA).

Belongs to the plant dirigent protein family. As to quaternary structure, homodimer.

It localises to the secreted. The protein localises to the extracellular space. The protein resides in the apoplast. In terms of biological role, dirigent proteins impart stereoselectivity on the phenoxy radical-coupling reaction, yielding optically active lignans from two molecules of coniferyl alcohol in the biosynthesis of lignans, flavonolignans, and alkaloids and thus plays a central role in plant secondary metabolism. This is Dirigent protein 16 (DIR16) from Arabidopsis thaliana (Mouse-ear cress).